The chain runs to 260 residues: Ribosomal RNA small subunit methyltransferase G (260 aa).

The disordered stretch occupies residues 1–45 (MKQRGPAGGRSSSPKPSAPGSGAGEGPDGRSAPASQKINKASAND). Low complexity predominate over residues 9-20 (GRSSSPKPSAPG). The segment covering 33-45 (PASQKINKASAND) has biased composition (polar residues). S-adenosyl-L-methionine is bound by residues Gly-123, Phe-128, and Arg-193.

It belongs to the methyltransferase superfamily. RNA methyltransferase RsmG family.

It localises to the cytoplasm. It carries out the reaction guanosine(527) in 16S rRNA + S-adenosyl-L-methionine = N(7)-methylguanosine(527) in 16S rRNA + S-adenosyl-L-homocysteine. Its function is as follows. Specifically methylates the N7 position of guanine in position 527 of 16S rRNA. This is Ribosomal RNA small subunit methyltransferase G from Bradyrhizobium diazoefficiens (strain JCM 10833 / BCRC 13528 / IAM 13628 / NBRC 14792 / USDA 110).